Consider the following 257-residue polypeptide: Phosphate import ATP-binding protein PstB (257 aa).

An ABC transporter domain is found at 11 to 252; sequence IQVRDLNFYY…PAKKQTEDYI (242 aa). Residue 43 to 50 participates in ATP binding; sequence GPSGSGKS.

Belongs to the ABC transporter superfamily. Phosphate importer (TC 3.A.1.7) family. In terms of assembly, the complex is composed of two ATP-binding proteins (PstB), two transmembrane proteins (PstC and PstA) and a solute-binding protein (PstS).

The protein resides in the cell inner membrane. The catalysed reaction is phosphate(out) + ATP + H2O = ADP + 2 phosphate(in) + H(+). In terms of biological role, part of the ABC transporter complex PstSACB involved in phosphate import. Responsible for energy coupling to the transport system. This is Phosphate import ATP-binding protein PstB from Salmonella choleraesuis (strain SC-B67).